The primary structure comprises 494 residues: Ketol-acid reductoisomerase (NADP(+)) (494 aa).

The region spanning 14 to 208 is the KARI N-terminal Rossmann domain; sequence LEQLGKCRFM…GGHRAGVLQS (195 aa). Residues 45 to 48, Arg-68, Arg-76, Ser-78, and 108 to 110 each bind NADP(+); these read CGAQ and DKQ. Residue His-132 is part of the active site. Residue Gly-158 participates in NADP(+) binding. 2 consecutive KARI C-terminal knotted domains span residues 209–344 and 345–487; these read SFVA…NAPA and FDGA…MKDM. The Mg(2+) site is built by Asp-217, Glu-221, Glu-389, and Glu-393. Ser-414 is a binding site for substrate.

Belongs to the ketol-acid reductoisomerase family. The cofactor is Mg(2+).

The catalysed reaction is (2R)-2,3-dihydroxy-3-methylbutanoate + NADP(+) = (2S)-2-acetolactate + NADPH + H(+). It catalyses the reaction (2R,3R)-2,3-dihydroxy-3-methylpentanoate + NADP(+) = (S)-2-ethyl-2-hydroxy-3-oxobutanoate + NADPH + H(+). It participates in amino-acid biosynthesis; L-isoleucine biosynthesis; L-isoleucine from 2-oxobutanoate: step 2/4. It functions in the pathway amino-acid biosynthesis; L-valine biosynthesis; L-valine from pyruvate: step 2/4. Functionally, involved in the biosynthesis of branched-chain amino acids (BCAA). Catalyzes an alkyl-migration followed by a ketol-acid reduction of (S)-2-acetolactate (S2AL) to yield (R)-2,3-dihydroxy-isovalerate. In the isomerase reaction, S2AL is rearranged via a Mg-dependent methyl migration to produce 3-hydroxy-3-methyl-2-ketobutyrate (HMKB). In the reductase reaction, this 2-ketoacid undergoes a metal-dependent reduction by NADPH to yield (R)-2,3-dihydroxy-isovalerate. The polypeptide is Ketol-acid reductoisomerase (NADP(+)) (Tolumonas auensis (strain DSM 9187 / NBRC 110442 / TA 4)).